Consider the following 481-residue polypeptide: Glutamate mutase epsilon subunit (481 aa).

Arginine 67 serves as a coordination point for L-glutamate. Glycine 69 contributes to the adenosylcob(III)alamin binding site. Arginine 99 contributes to the L-glutamate binding site. Asparagine 122 is an adenosylcob(III)alamin binding site. L-glutamate contacts are provided by residues 148 to 149 (RH), glutamate 170, and tyrosine 176. Proline 179 is a binding site for adenosylcob(III)alamin. An L-glutamate-binding site is contributed by tyrosine 180. Positions 296, 325, 329, and 333 each coordinate adenosylcob(III)alamin.

This sequence belongs to the methylaspartate mutase GlmE subunit family. As to quaternary structure, heterotetramer composed of 2 epsilon subunits (GlmE) and 2 sigma subunits (GlmS). GlmE exists as a homodimer and GlmS as a monomer. The cofactor is adenosylcob(III)alamin.

It carries out the reaction (2S,3S)-3-methyl-L-aspartate = L-glutamate. It functions in the pathway amino-acid degradation; L-glutamate degradation via mesaconate pathway; acetate and pyruvate from L-glutamate: step 1/4. Functionally, catalyzes the carbon skeleton rearrangement of L-glutamate to L-threo-3-methylaspartate ((2S,3S)-3-methylaspartate). The polypeptide is Glutamate mutase epsilon subunit (Escherichia coli O157:H7).